Reading from the N-terminus, the 324-residue chain is Beta-ketoacyl-[acyl-carrier-protein] synthase III (324 aa).

Catalysis depends on residues Cys112 and His249. The ACP-binding stretch occupies residues 250 to 254; the sequence is QANRR. Asn279 is an active-site residue.

Belongs to the thiolase-like superfamily. FabH family. As to quaternary structure, homodimer.

It localises to the cytoplasm. It carries out the reaction malonyl-[ACP] + acetyl-CoA + H(+) = 3-oxobutanoyl-[ACP] + CO2 + CoA. It functions in the pathway lipid metabolism; fatty acid biosynthesis. In terms of biological role, catalyzes the condensation reaction of fatty acid synthesis by the addition to an acyl acceptor of two carbons from malonyl-ACP. Catalyzes the first condensation reaction which initiates fatty acid synthesis and may therefore play a role in governing the total rate of fatty acid production. Possesses both acetoacetyl-ACP synthase and acetyl transacylase activities. Its substrate specificity determines the biosynthesis of branched-chain and/or straight-chain of fatty acids. In Streptococcus pyogenes serotype M4 (strain MGAS10750), this protein is Beta-ketoacyl-[acyl-carrier-protein] synthase III.